The chain runs to 251 residues: Ditrans,polycis-undecaprenyl-diphosphate synthase ((2E,6E)-farnesyl-diphosphate specific) (251 aa).

The active site involves Asp-26. Asp-26 serves as a coordination point for Mg(2+). Residues 27–30 (GNGR), Trp-31, Arg-39, His-43, and 71–73 (SSE) contribute to the substrate site. Asn-74 acts as the Proton acceptor in catalysis. Substrate contacts are provided by residues Trp-75, Arg-77, Arg-194, and 200 to 202 (RIS). Position 213 (Glu-213) interacts with Mg(2+).

It belongs to the UPP synthase family. In terms of assembly, homodimer. Mg(2+) is required as a cofactor.

The catalysed reaction is 8 isopentenyl diphosphate + (2E,6E)-farnesyl diphosphate = di-trans,octa-cis-undecaprenyl diphosphate + 8 diphosphate. In terms of biological role, catalyzes the sequential condensation of isopentenyl diphosphate (IPP) with (2E,6E)-farnesyl diphosphate (E,E-FPP) to yield (2Z,6Z,10Z,14Z,18Z,22Z,26Z,30Z,34E,38E)-undecaprenyl diphosphate (di-trans,octa-cis-UPP). UPP is the precursor of glycosyl carrier lipid in the biosynthesis of bacterial cell wall polysaccharide components such as peptidoglycan and lipopolysaccharide. This chain is Ditrans,polycis-undecaprenyl-diphosphate synthase ((2E,6E)-farnesyl-diphosphate specific), found in Buchnera aphidicola subsp. Acyrthosiphon pisum (strain APS) (Acyrthosiphon pisum symbiotic bacterium).